The primary structure comprises 120 residues: Ribonuclease P protein component 2 (120 aa).

The protein belongs to the eukaryotic/archaeal RNase P protein component 2 family. As to quaternary structure, homodimer in solution. Component of RNase P which consists of a catalytic RNA component and at least 5 protein subunits. Forms a heterotetrameric subcomplex with Rnp3. Reconstituted enzyme missing individual protein subunits is suboptimally active, showing each subunit contributes to optimization of activity.

Its subcellular location is the cytoplasm. The enzyme catalyses Endonucleolytic cleavage of RNA, removing 5'-extranucleotides from tRNA precursor.. In terms of biological role, part of ribonuclease P, a protein complex that generates mature tRNA molecules by cleaving their 5'-ends. This chain is Ribonuclease P protein component 2, found in Pyrococcus horikoshii (strain ATCC 700860 / DSM 12428 / JCM 9974 / NBRC 100139 / OT-3).